The primary structure comprises 234 residues: Putative N-acetylmannosamine-6-phosphate 2-epimerase (234 aa).

This sequence belongs to the NanE family.

It catalyses the reaction an N-acyl-D-glucosamine 6-phosphate = an N-acyl-D-mannosamine 6-phosphate. It functions in the pathway amino-sugar metabolism; N-acetylneuraminate degradation; D-fructose 6-phosphate from N-acetylneuraminate: step 3/5. Converts N-acetylmannosamine-6-phosphate (ManNAc-6-P) to N-acetylglucosamine-6-phosphate (GlcNAc-6-P). In Klebsiella pneumoniae (strain 342), this protein is Putative N-acetylmannosamine-6-phosphate 2-epimerase.